We begin with the raw amino-acid sequence, 284 residues long: Spermidine/putrescine transport system permease protein PotC homolog (284 aa).

6 helical membrane passes run 13–33 (YFFLLITLIYLPLLIVVLVSL), 76–96 (IIIGVITVLVSVPIAVISAFA), 116–136 (LATPDIITAISLVLLFANTWL), 143–163 (GFFTIITSHISFSVPYALILI), 189–209 (FFHITLPYLMPSIFSAVLVVF), and 242–262 (AWAIAFGSILILISVLGVCLI). Residues 72 to 263 (LINSIIIGVI…ISVLGVCLIT (192 aa)) enclose the ABC transmembrane type-1 domain.

The protein belongs to the binding-protein-dependent transport system permease family. CysTW subfamily.

It is found in the cell membrane. Its function is as follows. Required for the activity of the bacterial transport system of putrescine and spermidine. The chain is Spermidine/putrescine transport system permease protein PotC homolog (potC) from Mycoplasma genitalium (strain ATCC 33530 / DSM 19775 / NCTC 10195 / G37) (Mycoplasmoides genitalium).